The primary structure comprises 41 residues: Alpha-conotoxin TxIB (41 aa).

Residues 1–20 (FDGRNTSANNKATDLMALPV) constitute a propeptide that is removed on maturation. 2 disulfide bridges follow: Cys23-Cys29 and Cys24-Cys37. The ser-Xaa-Pro motif, crucial for potent interaction with nAChR stretch occupies residues 25–27 (SDP). At Cys37 the chain carries Cysteine amide; in Alpha-conotoxin TxIB. Positions 39–41 (GRR) are excised as a propeptide.

This sequence belongs to the conotoxin A superfamily. In terms of tissue distribution, expressed by the venom duct.

Its subcellular location is the secreted. Alpha-conotoxins act on postsynaptic membranes, they bind to the nicotinic acetylcholine receptors (nAChR) and thus inhibit them. This conotoxin is a subtype-specific blocker of alpha-6/alpha-3-beta-2-beta-3 (CHRNA6/CHRNA3-CHRNB2-CHRNB3) nAChRs nicotinic acetylcholine receptors (nAChRs) (IC(50)=28.4 nM). The chain is Alpha-conotoxin TxIB from Conus textile (Cloth-of-gold cone).